We begin with the raw amino-acid sequence, 105 residues long: Vacuolar ATPase assembly integral membrane protein VMA21 homolog (105 aa).

The interval 1–26 (MSTKNKKAAGGNGGAPKQTRQQSHDS) is disordered. The Cytoplasmic portion of the chain corresponds to 1–36 (MSTKNKKAAGGNGGAPKQTRQQSHDSQDYSSFKTVL). Residues 37–57 (FYCMLIVFLPVLTFFVLKGFV) traverse the membrane as a helical segment. Over 58 to 68 (LDQFLDISEVK) the chain is Lumenal. A helical transmembrane segment spans residues 69–89 (VNIASAVGAVVALHVALGLYI). The Cytoplasmic segment spans residues 90–105 (YRAYFGAPGSKASKTD).

Belongs to the VMA21 family.

Its subcellular location is the endoplasmic reticulum membrane. It is found in the endoplasmic reticulum-Golgi intermediate compartment membrane. The protein resides in the cytoplasmic vesicle. It localises to the COPII-coated vesicle membrane. Its function is as follows. Required for the assembly of the V0 complex of the vacuolar ATPase (V-ATPase) in the endoplasmic reticulum. This Drosophila yakuba (Fruit fly) protein is Vacuolar ATPase assembly integral membrane protein VMA21 homolog.